Reading from the N-terminus, the 523-residue chain is Cilia- and flagella-associated protein 157 (523 aa).

The disordered stretch occupies residues 1-31 (MAPKKKPNKGGKEMQGKKIGGKKDASGTKTP). The span at 10 to 26 (GGKEMQGKKIGGKKDAS) shows a compositional bias: basic and acidic residues. Threonine 30 carries the phosphothreonine modification. 3 coiled-coil regions span residues 32-191 (ELAM…LEKK), 248-274 (VQLLQENEQLKGTQNKLCQQLEMLENT), and 302-371 (GTEE…VLIQ). Residues 419-440 (QPDMGSHQDKQPQGLSKESQRI) are disordered. The segment covering 429–440 (QPQGLSKESQRI) has biased composition (polar residues).

The protein belongs to the CFAP157 family. In terms of assembly, interacts with TUBB and TUBA4A. Interacts with CEP350. Specifically expressed in tissues containing motile cilia.

It localises to the cytoplasm. Its subcellular location is the cytoskeleton. The protein resides in the cilium basal body. In terms of biological role, specifically required during spermatogenesis for flagellum morphogenesis and sperm motility. May be required to suppress the formation of supernumerary axonemes and ensure a correct ultrastructure. The polypeptide is Cilia- and flagella-associated protein 157 (Mus musculus (Mouse)).